The following is a 69-amino-acid chain: Beta-defensin 43 (69 aa).

The first 22 residues, 1–22 (MRVLFSILGVLTLLSIVPLARS), serve as a signal peptide directing secretion. Intrachain disulfides connect Cys-29–Cys-56 and Cys-35–Cys-49.

It belongs to the beta-defensin family.

Its subcellular location is the secreted. Functionally, has bactericidal activity. The sequence is that of Beta-defensin 43 (Defb43) from Mus musculus (Mouse).